Consider the following 233-residue polypeptide: Small ribosomal subunit protein uS2 (233 aa).

Belongs to the universal ribosomal protein uS2 family.

In Clostridium botulinum (strain Eklund 17B / Type B), this protein is Small ribosomal subunit protein uS2.